We begin with the raw amino-acid sequence, 334 residues long: Holliday junction branch migration complex subunit RuvB (334 aa).

The segment at 1–182 (MDERLVSSEA…FGVLSRLEYY (182 aa)) is large ATPase domain (RuvB-L). Residues L21, R22, G63, K66, T67, T68, 129-131 (EDF), R172, Y182, and R219 each bind ATP. T67 is a Mg(2+) binding site. Residues 183-253 (TQEELTDIVS…IAHDALERLQ (71 aa)) are small ATPAse domain (RuvB-S). Positions 256–334 (ALGLDHIDHK…HFRLEAPARD (79 aa)) are head domain (RuvB-H). 2 residues coordinate DNA: R311 and R316.

It belongs to the RuvB family. In terms of assembly, homohexamer. Forms an RuvA(8)-RuvB(12)-Holliday junction (HJ) complex. HJ DNA is sandwiched between 2 RuvA tetramers; dsDNA enters through RuvA and exits via RuvB. An RuvB hexamer assembles on each DNA strand where it exits the tetramer. Each RuvB hexamer is contacted by two RuvA subunits (via domain III) on 2 adjacent RuvB subunits; this complex drives branch migration. In the full resolvosome a probable DNA-RuvA(4)-RuvB(12)-RuvC(2) complex forms which resolves the HJ.

The protein resides in the cytoplasm. It catalyses the reaction ATP + H2O = ADP + phosphate + H(+). The RuvA-RuvB-RuvC complex processes Holliday junction (HJ) DNA during genetic recombination and DNA repair, while the RuvA-RuvB complex plays an important role in the rescue of blocked DNA replication forks via replication fork reversal (RFR). RuvA specifically binds to HJ cruciform DNA, conferring on it an open structure. The RuvB hexamer acts as an ATP-dependent pump, pulling dsDNA into and through the RuvAB complex. RuvB forms 2 homohexamers on either side of HJ DNA bound by 1 or 2 RuvA tetramers; 4 subunits per hexamer contact DNA at a time. Coordinated motions by a converter formed by DNA-disengaged RuvB subunits stimulates ATP hydrolysis and nucleotide exchange. Immobilization of the converter enables RuvB to convert the ATP-contained energy into a lever motion, pulling 2 nucleotides of DNA out of the RuvA tetramer per ATP hydrolyzed, thus driving DNA branch migration. The RuvB motors rotate together with the DNA substrate, which together with the progressing nucleotide cycle form the mechanistic basis for DNA recombination by continuous HJ branch migration. Branch migration allows RuvC to scan DNA until it finds its consensus sequence, where it cleaves and resolves cruciform DNA. This chain is Holliday junction branch migration complex subunit RuvB, found in Bacillus velezensis (strain DSM 23117 / BGSC 10A6 / LMG 26770 / FZB42) (Bacillus amyloliquefaciens subsp. plantarum).